The following is a 402-amino-acid chain: Phosphoglycerate kinase (402 aa).

Substrate-binding positions include 24–26, arginine 40, 63–66, arginine 122, and arginine 155; these read DFN and HFGR. ATP-binding positions include lysine 206, glycine 297, glutamate 328, and 357-360; that span reads GGDS.

Belongs to the phosphoglycerate kinase family. In terms of assembly, monomer.

It localises to the cytoplasm. It catalyses the reaction (2R)-3-phosphoglycerate + ATP = (2R)-3-phospho-glyceroyl phosphate + ADP. The protein operates within carbohydrate degradation; glycolysis; pyruvate from D-glyceraldehyde 3-phosphate: step 2/5. The chain is Phosphoglycerate kinase from Synechococcus sp. (strain ATCC 27144 / PCC 6301 / SAUG 1402/1) (Anacystis nidulans).